Consider the following 329-residue polypeptide: Putative L-ascorbate peroxidase 6 (329 aa).

The active-site Proton acceptor is His-123. His-244 is a binding site for heme b.

The protein belongs to the peroxidase family. Ascorbate peroxidase subfamily. Heme b is required as a cofactor.

It catalyses the reaction L-ascorbate + H2O2 = L-dehydroascorbate + 2 H2O. In terms of biological role, plays a key role in hydrogen peroxide removal. The polypeptide is Putative L-ascorbate peroxidase 6 (APX6) (Arabidopsis thaliana (Mouse-ear cress)).